Consider the following 413-residue polypeptide: Putative zinc finger protein B0310.2 (413 aa).

2 disordered regions span residues 130-151 and 259-290; these read PIFS…KRSL and VESD…TGPM. Residues 270-281 are compositionally biased toward polar residues; that stretch reads PSPSTGDITENE. C2H2-type zinc fingers lie at residues 306 to 330 and 336 to 358; these read FICM…MFIH and HTCP…KKTH.

It localises to the nucleus. This Caenorhabditis elegans protein is Putative zinc finger protein B0310.2.